The chain runs to 711 residues: Tyrosine-protein phosphatase 2 (711 aa).

The region spanning 21-130 (TESVSWIIDL…FASSHPDAIV (110 aa)) is the Rhodanese domain. Disordered regions lie at residues 275 to 306 (APQQTPARPSLRSVPSYPSSNNQRRPSASRVR) and 329 to 376 (IIPR…RANK). Composition is skewed to polar residues over residues 290–306 (SYPSSNNQRRPSASRVR) and 340–363 (NAQNDGTSTMTSKLKPSVGLSNTR). The Tyrosine-protein phosphatase domain maps to 433 to 698 (EMTRSLAFND…KFLYDVVDYL (266 aa)). Cys-630 functions as the Phosphocysteine intermediate in the catalytic mechanism.

The protein belongs to the protein-tyrosine phosphatase family. Non-receptor class subfamily.

Its subcellular location is the cytoplasm. It catalyses the reaction O-phospho-L-tyrosyl-[protein] + H2O = L-tyrosyl-[protein] + phosphate. Functionally, plays a role in inhibiting the onset of mitosis. Dephosphorylates sty1/spc1 and wis1/spc2/sty2. The protein is Tyrosine-protein phosphatase 2 (pyp2) of Schizosaccharomyces pombe (strain 972 / ATCC 24843) (Fission yeast).